Here is a 248-residue protein sequence, read N- to C-terminus: Tyrosine recombinase XerD-like (248 aa).

One can recognise a Core-binding (CB) domain in the interval 1-72; sequence MKSYIEPFIA…TANQFLYYLY (72 aa). The region spanning 85-248 is the Tyr recombinase domain; it reads DTMKVMRTEK…PVTLEKYYKS (164 aa). Active-site residues include Lys149 and Arg213. The O-(3'-phospho-DNA)-tyrosine intermediate role is filled by Tyr245.

It belongs to the 'phage' integrase family. XerD-like subfamily.

The protein resides in the cytoplasm. Functionally, putative tyrosine recombinase. Not involved in the cutting and rejoining of the recombining DNA molecules on dif(SL) site. The chain is Tyrosine recombinase XerD-like from Streptococcus pyogenes serotype M4 (strain MGAS10750).